The chain runs to 369 residues: Uroporphyrinogen decarboxylase (369 aa).

Substrate is bound by residues 28–32 (RQAGR), Asp-78, Tyr-154, Ser-209, and His-339.

It belongs to the uroporphyrinogen decarboxylase family. Homodimer.

The protein resides in the cytoplasm. It catalyses the reaction uroporphyrinogen III + 4 H(+) = coproporphyrinogen III + 4 CO2. It functions in the pathway porphyrin-containing compound metabolism; protoporphyrin-IX biosynthesis; coproporphyrinogen-III from 5-aminolevulinate: step 4/4. Catalyzes the decarboxylation of four acetate groups of uroporphyrinogen-III to yield coproporphyrinogen-III. This is Uroporphyrinogen decarboxylase from Polaromonas naphthalenivorans (strain CJ2).